We begin with the raw amino-acid sequence, 253 residues long: Geranylgeranylglyceryl phosphate synthase (253 aa).

Asp-28 and Ser-53 together coordinate Mg(2+). Sn-glycerol 1-phosphate is bound by residues 172 to 178, 203 to 204, and 225 to 226; these read YLEAGSG, GG, and GN.

The protein belongs to the GGGP/HepGP synthase family. Group II subfamily. Requires Mg(2+) as cofactor.

Its subcellular location is the cytoplasm. It catalyses the reaction sn-glycerol 1-phosphate + (2E,6E,10E)-geranylgeranyl diphosphate = sn-3-O-(geranylgeranyl)glycerol 1-phosphate + diphosphate. The protein operates within membrane lipid metabolism; glycerophospholipid metabolism. Functionally, prenyltransferase that catalyzes the transfer of the geranylgeranyl moiety of geranylgeranyl diphosphate (GGPP) to the C3 hydroxyl of sn-glycerol-1-phosphate (G1P). This reaction is the first ether-bond-formation step in the biosynthesis of archaeal membrane lipids. The sequence is that of Geranylgeranylglyceryl phosphate synthase from Methanocaldococcus jannaschii (strain ATCC 43067 / DSM 2661 / JAL-1 / JCM 10045 / NBRC 100440) (Methanococcus jannaschii).